Reading from the N-terminus, the 85-residue chain is Small ribosomal subunit protein bS20 (85 aa).

This sequence belongs to the bacterial ribosomal protein bS20 family.

In terms of biological role, binds directly to 16S ribosomal RNA. The polypeptide is Small ribosomal subunit protein bS20 (Borrelia garinii subsp. bavariensis (strain ATCC BAA-2496 / DSM 23469 / PBi) (Borreliella bavariensis)).